Reading from the N-terminus, the 432-residue chain is Enolase (432 aa).

Residue Q167 participates in (2R)-2-phosphoglycerate binding. The Proton donor role is filled by E209. Mg(2+) is bound by residues D246, E291, and D318. K343, R372, S373, and K394 together coordinate (2R)-2-phosphoglycerate. K343 acts as the Proton acceptor in catalysis.

This sequence belongs to the enolase family. In terms of assembly, component of the RNA degradosome, a multiprotein complex involved in RNA processing and mRNA degradation. It depends on Mg(2+) as a cofactor.

It localises to the cytoplasm. It is found in the secreted. Its subcellular location is the cell surface. It carries out the reaction (2R)-2-phosphoglycerate = phosphoenolpyruvate + H2O. Its pathway is carbohydrate degradation; glycolysis; pyruvate from D-glyceraldehyde 3-phosphate: step 4/5. In terms of biological role, catalyzes the reversible conversion of 2-phosphoglycerate (2-PG) into phosphoenolpyruvate (PEP). It is essential for the degradation of carbohydrates via glycolysis. The sequence is that of Enolase from Aliivibrio fischeri (strain ATCC 700601 / ES114) (Vibrio fischeri).